Here is a 1026-residue protein sequence, read N- to C-terminus: Multidrug resistance protein MdtC (1026 aa).

11 helical membrane-spanning segments follow: residues 15–35 (ILIA…LPVA), 333–353 (EVEE…FLFL), 360–380 (LIPA…MYLC), 387–407 (LSLM…IVVL), 431–451 (VGFT…PLLL), 463–483 (FAVT…TLTP), 528–548 (LVGV…IAIP), 853–873 (LILI…LYES), 897–917 (LFNA…IGIV), 953–973 (PIMM…LSGG), and 984–1004 (ITIV…TPVV).

The protein belongs to the resistance-nodulation-cell division (RND) (TC 2.A.6) family. MdtC subfamily. As to quaternary structure, part of a tripartite efflux system composed of MdtA, MdtB and MdtC. MdtC forms a heteromultimer with MdtB.

The protein localises to the cell inner membrane. This is Multidrug resistance protein MdtC from Salmonella dublin (strain CT_02021853).